Consider the following 42-residue polypeptide: YITCLFRGARCRVYSGRSCCFGYYCRRDFPGSIFGTCSRRNF.

3 cysteine pairs are disulfide-bonded: cysteine 4-cysteine 20, cysteine 11-cysteine 25, and cysteine 19-cysteine 37.

As to expression, granular hemocytes, small secretory granules.

It localises to the secreted. In terms of biological role, exhibits stronger antimicrobial activity against the Gram-positive bacteria (S.aureus (IC(50) is 7.4 ug/ml)) and fungi (C.albicans (IC(50) is 3.0 ug/ml) and P.pastoris (IC(50) is 0.1 ug/ml)) than Gram-negative bacteria (E.coli no inhibition at 100 ug/ml). Binds to chitin (4.3 uM are required to obtain 50% of binding). Does not cause hemolysis on sheep erythrocytes. Has no blocking activity on the P-type calcium channel. This chain is Tachystatin-B2, found in Tachypleus tridentatus (Japanese horseshoe crab).